The sequence spans 264 residues: tRNA (guanine-N(1)-)-methyltransferase (264 aa).

S-adenosyl-L-methionine is bound by residues Gly125 and 145–150 (LGDFVL).

The protein belongs to the RNA methyltransferase TrmD family. Homodimer.

The protein localises to the cytoplasm. The catalysed reaction is guanosine(37) in tRNA + S-adenosyl-L-methionine = N(1)-methylguanosine(37) in tRNA + S-adenosyl-L-homocysteine + H(+). In terms of biological role, specifically methylates guanosine-37 in various tRNAs. The polypeptide is tRNA (guanine-N(1)-)-methyltransferase (Burkholderia cenocepacia (strain ATCC BAA-245 / DSM 16553 / LMG 16656 / NCTC 13227 / J2315 / CF5610) (Burkholderia cepacia (strain J2315))).